Consider the following 333-residue polypeptide: MTIAPEGRRMLRIEARNAETPIERKPSWIRTKARTGPDYTELKGLVKSGGLHTVCEEAGCPNIYECWEDREATFLIGGSECTRRCDFCQIDTGKPSPLDRDEPRRVAESIATMGLRYATITGVARDDLDDGGAWLYAETIRATHAANPGTGVEILVPDFNGKPELLQQVFDAQPEVFAHNVETVPRIFKSIRPAFRYERSLDVITQGRDAGLVTKSNLILGMGETDEEVLEALADLRGAGCDIITITQYLRPTPRHHPVERWVKPEKFVEFSAEAERLGFAGVMAGPLVRSSYRAGRLWAQAMKRRGVAIPAQLAHLDKESPAAQEASSLLAR.

[4Fe-4S] cluster-binding residues include Cys-55, Cys-60, Cys-66, Cys-81, Cys-85, Cys-88, and Ser-292. The Radical SAM core domain maps to 67–281 (WEDREATFLI…SAEAERLGFA (215 aa)).

Belongs to the radical SAM superfamily. Lipoyl synthase family. [4Fe-4S] cluster is required as a cofactor.

The protein localises to the cytoplasm. The catalysed reaction is [[Fe-S] cluster scaffold protein carrying a second [4Fe-4S](2+) cluster] + N(6)-octanoyl-L-lysyl-[protein] + 2 oxidized [2Fe-2S]-[ferredoxin] + 2 S-adenosyl-L-methionine + 4 H(+) = [[Fe-S] cluster scaffold protein] + N(6)-[(R)-dihydrolipoyl]-L-lysyl-[protein] + 4 Fe(3+) + 2 hydrogen sulfide + 2 5'-deoxyadenosine + 2 L-methionine + 2 reduced [2Fe-2S]-[ferredoxin]. Its pathway is protein modification; protein lipoylation via endogenous pathway; protein N(6)-(lipoyl)lysine from octanoyl-[acyl-carrier-protein]: step 2/2. Its function is as follows. Catalyzes the radical-mediated insertion of two sulfur atoms into the C-6 and C-8 positions of the octanoyl moiety bound to the lipoyl domains of lipoate-dependent enzymes, thereby converting the octanoylated domains into lipoylated derivatives. The polypeptide is Lipoyl synthase (Kineococcus radiotolerans (strain ATCC BAA-149 / DSM 14245 / SRS30216)).